The primary structure comprises 232 residues: Response regulator MprA (232 aa).

The Response regulatory domain maps to 4–118 (RILVVDDDRA…ELLARMRALL (115 aa)). Aspartate 48 is modified (4-aspartylphosphate). The ompR/PhoB-type DNA-binding region spans 131 to 229 (SVAMTFSDLS…VRGVGYVLRE (99 aa)).

Post-translationally, phosphorylated and dephosphorylated by MprB.

Its subcellular location is the cytoplasm. Functionally, member of the two-component regulatory system MprB/MprA which contributes to maintaining a balance among several systems involved in stress resistance and is required for establishment and maintenance of persistent infection in the host. Functions as a transcriptional regulator that recognizes a 19-bp nucleotide motif comprizing two loosely conserved 8-bp direct DNA-binding motif repeats separated by a 3-bp spacer region. The protein is Response regulator MprA (mprA) of Mycobacterium ulcerans (strain Agy99).